A 1703-amino-acid polypeptide reads, in one-letter code: Ferlin 2 (1703 aa).

C2 domains are found at residues 18 to 141 (IRKL…KTWL) and 207 to 332 (KQPV…FRWF). 3 disordered regions span residues 913 to 937 (NQFN…FDDN), 970 to 1025 (NLDK…TSST), and 1194 to 1228 (KNKS…QKLG). Over residues 916-928 (NDDDEGDNEDEQD) the composition is skewed to acidic residues. The span at 979 to 991 (QPQSLKNLQNLDS) shows a compositional bias: polar residues. The span at 993–1009 (SKADQKSQFDLKSESKS) shows a compositional bias: basic and acidic residues. Residues 1198–1209 (NRSSMSLSMRSS) are compositionally biased toward low complexity. The region spanning 1466-1595 (VARIIPPSTI…LKKLKEGIVF (130 aa)) is the C2 3 domain. Positions 1628–1651 (AAESDPVGEGQNEPNKDPILEKPK) are disordered. Positions 1641 to 1651 (PNKDPILEKPK) are enriched in basic and acidic residues. The chain crosses the membrane as a helical span at residues 1681-1701 (FAGIFVSIVTMMILFVKPGIL).

Belongs to the ferlin family.

The protein localises to the membrane. In terms of biological role, regulates mucocyst exocytosis. The chain is Ferlin 2 from Tetrahymena thermophila (strain SB210).